Reading from the N-terminus, the 259-residue chain is MSLKMKYNLGYLFDLLVVITNKDLKVRYKSSVFGYLWSIANPLLFAMIYYFIFKLVMRVQIPNYTLFLITGLFPWQWFASSATNSLFSFIANAQIIKKTVFPRSVIPLSNVMMEGLHFLCTIPVIIAFLFVYGMRPSLSWLWGIPIIAIGQVIFTFGISIIFSTLNLFFRDLERFVSLGIMLMFYCTPILYASDMIPEKFSWIITYNPLASMILSWRELFMNGVLNYEYISILYITGFILTIVGLAIFNKLKYRFAEIL.

The next 6 membrane-spanning stretches (helical) occupy residues phenylalanine 33–phenylalanine 53, phenylalanine 73–isoleucine 95, valine 111–valine 131, tryptophan 142–phenylalanine 162, valine 176–isoleucine 196, and glutamate 228–phenylalanine 248. An ABC transmembrane type-2 domain is found at phenylalanine 33 to leucine 251.

The protein belongs to the ABC-2 integral membrane protein family.

It is found in the cell inner membrane. In terms of biological role, may form an ATP-driven O-antigen export apparatus, in association with RfbB. This Klebsiella pneumoniae protein is O-antigen export system permease protein RfbA (rfbA).